We begin with the raw amino-acid sequence, 344 residues long: 3-isopropylmalate dehydrogenase (344 aa).

Residues arginine 93, arginine 103, arginine 131, and aspartate 215 each contribute to the substrate site. The Mg(2+) site is built by aspartate 215, aspartate 239, and aspartate 243. An NAD(+)-binding site is contributed by 273-285 (GSAPDIAGKGIAN).

The protein belongs to the isocitrate and isopropylmalate dehydrogenases family. LeuB type 1 subfamily. In terms of assembly, homodimer. Requires Mg(2+) as cofactor. It depends on Mn(2+) as a cofactor.

Its subcellular location is the cytoplasm. It carries out the reaction (2R,3S)-3-isopropylmalate + NAD(+) = 4-methyl-2-oxopentanoate + CO2 + NADH. The protein operates within amino-acid biosynthesis; L-leucine biosynthesis; L-leucine from 3-methyl-2-oxobutanoate: step 3/4. Functionally, catalyzes the oxidation of 3-carboxy-2-hydroxy-4-methylpentanoate (3-isopropylmalate) to 3-carboxy-4-methyl-2-oxopentanoate. The product decarboxylates to 4-methyl-2 oxopentanoate. In Streptococcus mutans serotype c (strain ATCC 700610 / UA159), this protein is 3-isopropylmalate dehydrogenase.